The primary structure comprises 370 residues: 3-hydroxy-3-methylglutaryl-CoA lyase, cytoplasmic (370 aa).

A lipid anchor (N-myristoyl glycine) is attached at Gly2. In terms of domain architecture, Pyruvate carboxyltransferase spans 78–345 (VKIVEVGPRD…NTGVNLYKVM (268 aa)). Position 86 (Arg86) interacts with substrate. A divalent metal cation contacts are provided by Asp87, His278, and His280. Cys311 is a catalytic residue. An a divalent metal cation-binding site is contributed by Asn320.

The protein belongs to the HMG-CoA lyase family. A divalent metal cation is required as a cofactor.

Its subcellular location is the cytoplasm. The protein localises to the cytosol. The protein resides in the endoplasmic reticulum membrane. The enzyme catalyses (3S)-3-hydroxy-3-methylglutaryl-CoA = acetoacetate + acetyl-CoA. The protein operates within metabolic intermediate metabolism; (S)-3-hydroxy-3-methylglutaryl-CoA degradation; acetoacetate from (S)-3-hydroxy-3-methylglutaryl-CoA: step 1/1. In terms of biological role, non-mitochondrial 3-hydroxy-3-methylglutaryl-CoA lyase that catalyzes a cation-dependent cleavage of (S)-3-hydroxy-3-methylglutaryl-CoA into acetyl-CoA and acetoacetate, a key step in ketogenesis, the products of which support energy production in nonhepatic animal tissues. The chain is 3-hydroxy-3-methylglutaryl-CoA lyase, cytoplasmic (HMGCLL1) from Homo sapiens (Human).